The following is a 539-amino-acid chain: GMP synthase [glutamine-hydrolyzing] (539 aa).

In terms of domain architecture, Glutamine amidotransferase type-1 spans 20-215; it reads TILILDFGSQ…AIEICHAKPN (196 aa). The Nucleophile role is filled by cysteine 96. Active-site residues include histidine 189 and glutamate 191. Residues 216 to 413 enclose the GMPS ATP-PPase domain; sequence WSMENFVDKE…LGIEHSLVWR (198 aa). 244–250 is an ATP binding site; it reads SGGVDST. Residues arginine 317, aspartate 475, lysine 531, and glutamate 537 each contribute to the XMP site.

As to quaternary structure, homodimer. The cofactor is Mg(2+).

It is found in the cytoplasm. Its subcellular location is the cytosol. It catalyses the reaction XMP + L-glutamine + ATP + H2O = GMP + L-glutamate + AMP + diphosphate + 2 H(+). Its pathway is purine metabolism; GMP biosynthesis; GMP from XMP (L-Gln route): step 1/1. Catalyzes the conversion of xanthine monophosphate (XMP) to GMP in the presence of glutamine and ATP through an adenyl-XMP intermediate. In Schizosaccharomyces pombe (strain 972 / ATCC 24843) (Fission yeast), this protein is GMP synthase [glutamine-hydrolyzing].